A 141-amino-acid chain; its full sequence is Nucleoside triphosphatase NudI (141 aa).

One can recognise a Nudix hydrolase domain in the interval M1–L141. A Nudix box motif is present at residues G38–G59.

The protein belongs to the Nudix hydrolase family. NudI subfamily. In terms of assembly, monomer. The cofactor is Mg(2+).

The catalysed reaction is a ribonucleoside 5'-triphosphate + H2O = a ribonucleoside 5'-phosphate + diphosphate + H(+). It catalyses the reaction a 2'-deoxyribonucleoside 5'-triphosphate + H2O = a 2'-deoxyribonucleoside 5'-phosphate + diphosphate + H(+). It carries out the reaction dUTP + H2O = dUMP + diphosphate + H(+). The enzyme catalyses dTTP + H2O = dTMP + diphosphate + H(+). The catalysed reaction is dCTP + H2O = dCMP + diphosphate + H(+). Functionally, catalyzes the hydrolysis of nucleoside triphosphates, with a preference for pyrimidine deoxynucleoside triphosphates (dUTP, dTTP and dCTP). This chain is Nucleoside triphosphatase NudI, found in Klebsiella pneumoniae (strain 342).